The sequence spans 406 residues: Kelch domain-containing protein 2 (406 aa).

Kelch repeat units follow at residues 31 to 85 (ERSG…NTEG), 92 to 136 (SGSC…ERID), 148 to 207 (LGVW…TWSQ), 221 to 259 (HACA…NELI), 271 to 311 (HSLT…IQFN), and 322 to 359 (HTAC…IFSV).

Component of a CRL2(KLHDC2) E3 ubiquitin-protein ligase complex, also named ECS(KLHDC2) complex, composed of CUL2, Elongin BC (ELOB and ELOC), RBX1 and substrate-specific adapter KLHDC2. May form oligomers as a KLHDC2-ELOB-ELOC complex; this interaction is autoinhibitory for the E3 ligase complex as the substrate-binding site of KLHDC2 is blocked in the oligomer. Interacts with CREB3; interaction is direct and specific as it does not interact with CREB1, ATF4, ATF6, JUN, FOS, CEBPA or herpes simplex virus transactivator VP16. Autoubiquitinated by the CRL2(KLHDC2) E3 ligase complex. As to expression, widely expressed, with high levels in skeletal muscle, heart, pancreas and liver. Undetectable in peripheral blood leukocytes.

It localises to the nucleus. It functions in the pathway protein modification; protein ubiquitination. Functionally, substrate-recognition component of a Cul2-RING (CRL2) E3 ubiquitin-protein ligase complex of the DesCEND (destruction via C-end degrons) pathway, which recognizes a C-degron located at the extreme C terminus of target proteins, leading to their ubiquitination and degradation. The C-degron recognized by the DesCEND pathway is usually a motif of less than ten residues and can be present in full-length proteins, truncated proteins or proteolytically cleaved forms. The CRL2(KLHDC2) complex specifically recognizes proteins with a diglycine (Gly-Gly) at the C-terminus, leading to their ubiquitination and degradation. The CRL2(KLHDC2) complex mediates ubiquitination and degradation of truncated SELENOK and SELENOS selenoproteins produced by failed UGA/Sec decoding, which end with a diglycine. The CRL2(KLHDC2) complex also recognizes proteolytically cleaved proteins ending with Gly-Gly, such as the N-terminal fragment of USP1, leading to their degradation. May also act as an indirect repressor of CREB3-mediated transcription by interfering with CREB3-DNA-binding. The polypeptide is Kelch domain-containing protein 2 (Homo sapiens (Human)).